Here is a 497-residue protein sequence, read N- to C-terminus: Zinc finger protein ZIC 2-B (497 aa).

Disordered stretches follow at residues 58 to 107 and 143 to 180; these read HMGA…TSQA and SAAA…PQGH. A compositionally biased stretch (gly residues) spans 66–88; that stretch reads PGGGSGGGSGGGGGAGPNGGAGA. Residues 97-107 are compositionally biased toward polar residues; sequence PGQTSAFTSQA. Positions 161 to 171 are enriched in basic residues; sequence LHHHPHHHHQL. The C2H2-type 1; atypical zinc-finger motif lies at 273-308; that stretch reads LICKWIDPEQLNNPKKSCNKTFSTMHELVTHMSVEH. A C2H2-type 2; atypical zinc finger spans residues 317–344; that stretch reads HICFWEECAREGKPFKAKYKLVNHIRVH. C2H2-type zinc fingers lie at residues 350–374, 380–404, and 410–432; these read FPCP…KRTH, FQCE…MHVH, and YLCK…MKVH. Residues 423-473 are disordered; that stretch reads SSLRKHMKVHESSPQGSESSPAASSGYESSTPPGLVSPNSETQNPNLSPAA. The segment covering 434-452 has biased composition (low complexity); sequence SSPQGSESSPAASSGYESS. Residues 459 to 469 are compositionally biased toward polar residues; sequence SPNSETQNPNL.

Belongs to the GLI C2H2-type zinc-finger protein family.

Its subcellular location is the nucleus. The protein resides in the cytoplasm. Transcriptional repressor that inhibits neurogenesis and induces neural and neural crest differentiation. Regulates anteroposterior patterning in early development by inhibiting expression of the nodal genes through the inhibition of vegt. Required for gastrulation movements and for proper anterior neural and axial development. May also act as a transcriptional activator. May bind to the minimal GLI-consensus sequence 5'-TGGGTGGTC-3'. In Xenopus laevis (African clawed frog), this protein is Zinc finger protein ZIC 2-B (zic2-b).